Consider the following 83-residue polypeptide: Arminin 3b (83 aa).

An N-terminal signal peptide occupies residues 1-18 (MKIVFAILFLTFIALTYA). A propeptide spanning residues 19 to 57 (RSFEDLKEEIKNEIEKEIFDDLEEESDELDNNVKKFNDA) is cleaved from the precursor. Ser-80 is subject to Serine amide.

The protein belongs to the arminin family. As to expression, expressed in entodermal epithelium along the body column.

The protein resides in the secreted. It localises to the target cell membrane. Its function is as follows. Antimicrobial peptide with a broad-spectrum antimicrobial activity. Keeps its antibacterial activity under a wide range of salt concentrations that mimic physiological conditions of human blood, which is surprising, since Hydra is an obligate freshwater animal with nearly no salt tolerance. Does not affect red blood cells. The protein is Arminin 3b of Hydra vulgaris (Hydra).